Reading from the N-terminus, the 228-residue chain is Ephrin-A5 (228 aa).

The first 20 residues, 1 to 20 (MPHVEMLLLAVAALWVCVRG), serve as a signal peptide directing secretion. One can recognise an Ephrin RBD domain in the interval 29–162 (ADRYAVYWNS…KLKVFVRPAN (134 aa)). Residue N37 is glycosylated (N-linked (GlcNAc...) asparagine). 2 disulfide bridges follow: C62–C102 and C90–C151. N203 carries the GPI-anchor amidated asparagine lipid modification. Residues 204–228 (AAQTPRIPIRLLATLLFLLAMLLIL) constitute a propeptide, removed in mature form.

Belongs to the ephrin family. Expressed in a graded fashion across the tectum being more strongly expressed towards the posterior pole.

It is found in the cell membrane. In terms of biological role, cell surface GPI-bound ligand for Eph receptors, a family of receptor tyrosine kinases which are crucial for migration, repulsion and adhesion during neuronal, vascular and epithelial development. Binds promiscuously Eph receptors residing on adjacent cells, leading to contact-dependent bidirectional signaling into neighboring cells. Induces compartmentalized signaling within a caveolae-like membrane microdomain when bound to the extracellular domain of its cognate receptor. This signaling event requires the activity of the Fyn tyrosine kinase. Activates the EPHA3 receptor to regulate cell-cell adhesion and cytoskeletal organization. With the receptor EPHA2 may regulate lens fiber cells shape and interactions and be important for lens transparency maintenance. May function actively to stimulate axon fasciculation. Induces growth cone collapse and repulsion of retinal ganglion cell axons. The protein is Ephrin-A5 (EFNA5) of Gallus gallus (Chicken).